Consider the following 29-residue polypeptide: Trypsin inhibitor 1 (29 aa).

Disulfide bonds link Cys3–Cys20, Cys10–Cys22, and Cys16–Cys28.

It belongs to the protease inhibitor I7 (squash-type serine protease inhibitor) family.

It is found in the secreted. Its function is as follows. Inhibits trypsin. In Cucurbita maxima (Pumpkin), this protein is Trypsin inhibitor 1.